A 467-amino-acid chain; its full sequence is ATP-dependent protease ATPase subunit HslU (467 aa).

ATP contacts are provided by residues V22 and 64-69 (GVGKTE). The tract at residues 149–192 (QTNNPLESLFGGAIPNFGQNNEDEEEPPTEEIKTKRSEIKRQLE) is disordered. The span at 178-192 (EEIKTKRSEIKRQLE) shows a compositional bias: basic and acidic residues. The ATP site is built by D280, E345, and R417.

It belongs to the ClpX chaperone family. HslU subfamily. As to quaternary structure, a double ring-shaped homohexamer of HslV is capped on each side by a ring-shaped HslU homohexamer. The assembly of the HslU/HslV complex is dependent on binding of ATP.

It is found in the cytoplasm. ATPase subunit of a proteasome-like degradation complex; this subunit has chaperone activity. The binding of ATP and its subsequent hydrolysis by HslU are essential for unfolding of protein substrates subsequently hydrolyzed by HslV. HslU recognizes the N-terminal part of its protein substrates and unfolds these before they are guided to HslV for hydrolysis. The polypeptide is ATP-dependent protease ATPase subunit HslU (Staphylococcus aureus (strain MW2)).